A 141-amino-acid chain; its full sequence is Chorion protein S16 (141 aa).

Residues 1-22 (MSANNMRLLCLLLACYISAIVA) form the signal peptide.

It belongs to the chorion protein S16 family.

Its subcellular location is the secreted. Chorion membrane (egg shell) protein; plays a role in protecting the egg from the environment. This chain is Chorion protein S16 (Cp16), found in Drosophila subobscura (Fruit fly).